Reading from the N-terminus, the 233-residue chain is tRNA1(Val) (adenine(37)-N6)-methyltransferase (233 aa).

It belongs to the methyltransferase superfamily. tRNA (adenine-N(6)-)-methyltransferase family.

The protein localises to the cytoplasm. The catalysed reaction is adenosine(37) in tRNA1(Val) + S-adenosyl-L-methionine = N(6)-methyladenosine(37) in tRNA1(Val) + S-adenosyl-L-homocysteine + H(+). Functionally, specifically methylates the adenine in position 37 of tRNA(1)(Val) (anticodon cmo5UAC). The chain is tRNA1(Val) (adenine(37)-N6)-methyltransferase from Shewanella amazonensis (strain ATCC BAA-1098 / SB2B).